A 131-amino-acid polypeptide reads, in one-letter code: Fatty acid-binding protein (131 aa).

(5Z,8Z,11Z,14Z)-eicosatetraenoate is bound by residues arginine 106 and 126–128 (RPY). Residues arginine 106 and 126–128 (RPY) each bind (9Z)-octadecenoate.

It belongs to the calycin superfamily. Fatty-acid binding protein (FABP) family.

The protein localises to the cytoplasm. Functionally, FABPs are thought to play a role in the intracellular transport of long-chain fatty acids and their acyl-CoA esters. This chain is Fatty acid-binding protein, found in Lepidoglyphus destructor (Storage mite).